We begin with the raw amino-acid sequence, 500 residues long: Probable cytosol aminopeptidase (500 aa).

Mn(2+)-binding residues include K265 and D270. Residue K277 is part of the active site. Mn(2+) is bound by residues D288, D347, and E349. The active site involves R351.

It belongs to the peptidase M17 family. Mn(2+) is required as a cofactor.

Its subcellular location is the cytoplasm. The catalysed reaction is Release of an N-terminal amino acid, Xaa-|-Yaa-, in which Xaa is preferably Leu, but may be other amino acids including Pro although not Arg or Lys, and Yaa may be Pro. Amino acid amides and methyl esters are also readily hydrolyzed, but rates on arylamides are exceedingly low.. It catalyses the reaction Release of an N-terminal amino acid, preferentially leucine, but not glutamic or aspartic acids.. Functionally, presumably involved in the processing and regular turnover of intracellular proteins. Catalyzes the removal of unsubstituted N-terminal amino acids from various peptides. The polypeptide is Probable cytosol aminopeptidase (Corynebacterium glutamicum (strain ATCC 13032 / DSM 20300 / JCM 1318 / BCRC 11384 / CCUG 27702 / LMG 3730 / NBRC 12168 / NCIMB 10025 / NRRL B-2784 / 534)).